The sequence spans 254 residues: Triosephosphate isomerase (254 aa).

A substrate-binding site is contributed by 9 to 11 (NWK). Residue histidine 98 is the Electrophile of the active site. Glutamate 170 serves as the catalytic Proton acceptor. Residues glycine 176, serine 215, and 236 to 237 (GG) each bind substrate.

The protein belongs to the triosephosphate isomerase family. Homodimer.

The protein localises to the cytoplasm. The enzyme catalyses D-glyceraldehyde 3-phosphate = dihydroxyacetone phosphate. The protein operates within carbohydrate biosynthesis; gluconeogenesis. It participates in carbohydrate degradation; glycolysis; D-glyceraldehyde 3-phosphate from glycerone phosphate: step 1/1. Functionally, involved in the gluconeogenesis. Catalyzes stereospecifically the conversion of dihydroxyacetone phosphate (DHAP) to D-glyceraldehyde-3-phosphate (G3P). This Buchnera aphidicola subsp. Cinara cedri (strain Cc) protein is Triosephosphate isomerase.